The sequence spans 251 residues: Triosephosphate isomerase (251 aa).

12–14 lines the substrate pocket; the sequence is NWK. Residue His-98 is the Electrophile of the active site. Glu-168 (proton acceptor) is an active-site residue. Substrate is bound by residues Gly-174, Ser-213, and 234 to 235; that span reads GG.

The protein belongs to the triosephosphate isomerase family. As to quaternary structure, homodimer.

It is found in the cytoplasm. The catalysed reaction is D-glyceraldehyde 3-phosphate = dihydroxyacetone phosphate. Its pathway is carbohydrate biosynthesis; gluconeogenesis. It functions in the pathway carbohydrate degradation; glycolysis; D-glyceraldehyde 3-phosphate from glycerone phosphate: step 1/1. Its function is as follows. Involved in the gluconeogenesis. Catalyzes stereospecifically the conversion of dihydroxyacetone phosphate (DHAP) to D-glyceraldehyde-3-phosphate (G3P). This chain is Triosephosphate isomerase, found in Afipia carboxidovorans (strain ATCC 49405 / DSM 1227 / KCTC 32145 / OM5) (Oligotropha carboxidovorans).